Reading from the N-terminus, the 260-residue chain is Triosephosphate isomerase (260 aa).

11-13 is a substrate binding site; sequence NWK. Residue His-103 is the Electrophile of the active site. Catalysis depends on Glu-175, which acts as the Proton acceptor. Residues Gly-181, Ser-220, and 241 to 242 each bind substrate; that span reads GG.

This sequence belongs to the triosephosphate isomerase family. As to quaternary structure, homodimer.

Its subcellular location is the cytoplasm. It catalyses the reaction D-glyceraldehyde 3-phosphate = dihydroxyacetone phosphate. Its pathway is carbohydrate biosynthesis; gluconeogenesis. It participates in carbohydrate degradation; glycolysis; D-glyceraldehyde 3-phosphate from glycerone phosphate: step 1/1. Involved in the gluconeogenesis. Catalyzes stereospecifically the conversion of dihydroxyacetone phosphate (DHAP) to D-glyceraldehyde-3-phosphate (G3P). This is Triosephosphate isomerase from Shewanella amazonensis (strain ATCC BAA-1098 / SB2B).